The primary structure comprises 500 residues: Lysine--tRNA ligase (500 aa).

Residues Glu-402 and Glu-409 each contribute to the Mg(2+) site.

It belongs to the class-II aminoacyl-tRNA synthetase family. As to quaternary structure, homodimer. Mg(2+) is required as a cofactor.

The protein localises to the cytoplasm. The enzyme catalyses tRNA(Lys) + L-lysine + ATP = L-lysyl-tRNA(Lys) + AMP + diphosphate. The sequence is that of Lysine--tRNA ligase from Buchnera aphidicola subsp. Baizongia pistaciae (strain Bp).